We begin with the raw amino-acid sequence, 508 residues long: Protein disulfide-isomerase (508 aa).

Positions 1–17 (MLRRALLCLAVAALVRA) are cleaved as a signal peptide. Residues 18-134 (DAPEEEDHVL…IVNWLKKRTG (117 aa)) enclose the Thioredoxin 1 domain. Active-site nucleophile residues include Cys53 and Cys56. A disulfide bridge connects residues Cys53 and Cys56. Lys200 carries the post-translational modification N6-acetyllysine. N6-succinyllysine occurs at positions 222 and 271. Ser331 carries the phosphoserine modification. The Thioredoxin 2 domain maps to 349-475 (GKIKPHLMSQ…FKKFLESGGQ (127 aa)). Residue Ser357 is modified to Phosphoserine; by FAM20C. Residues Cys397 and Cys400 each act as nucleophile in the active site. A disulfide bridge connects residues Cys397 and Cys400. Phosphoserine is present on Ser427. Residues 471-508 (ESGGQDGAGDDDDLEDLEEAEEPDMEEDDDQKAVKDEL) form a disordered region. Over residues 478-500 (AGDDDDLEDLEEAEEPDMEEDDD) the composition is skewed to acidic residues. Residues 505–508 (KDEL) carry the Prevents secretion from ER motif.

It belongs to the protein disulfide isomerase family. Heterodimer; heterodimerizes with the protein microsomal triglyceride transfer MTTP. Homodimer. Monomers and homotetramers may also occur. Interacts with P4HA2, forming a heterotetramer consisting of 2 alpha subunits (P4HA2) and 2 beta (P4HB), where P4HB plays the role of a structural subunit; this tetramer catalyzes the formation of 4-hydroxyproline in collagen. Also constitutes the structural subunit of the microsomal triacylglycerol transfer protein MTTP in mammalian cells. Stabilizes both enzymes and retain them in the ER without contributing to the catalytic activity. Binds UBQLN1. Interacts with ERO1B. Binds to CD4, and upon HIV-1 binding to the cell membrane, is part of a P4HB/PDI-CD4-CXCR4-gp120 complex. Interacts with ILDR2. Interacts with ERN1/IRE1A (via N-terminus); the interaction is enhanced by phosphorylation of P4HB by FAM20C in response to endoplasmic reticulum stress and results in attenuation of ERN1 activity. Post-translationally, phosphorylation of Ser-357 by FAM20C is induced by endoplasmic reticulum stress and results in a functional switch from oxidoreductase to molecular chaperone. It also promotes interaction with ERN1.

Its subcellular location is the endoplasmic reticulum. It is found in the endoplasmic reticulum lumen. The protein resides in the melanosome. It localises to the cell membrane. It catalyses the reaction Catalyzes the rearrangement of -S-S- bonds in proteins.. In terms of biological role, this multifunctional protein catalyzes the formation, breakage and rearrangement of disulfide bonds. At the cell surface, seems to act as a reductase that cleaves disulfide bonds of proteins attached to the cell. May therefore cause structural modifications of exofacial proteins. Inside the cell, seems to form/rearrange disulfide bonds of nascent proteins. At high concentrations and following phosphorylation by FAM20C, functions as a chaperone that inhibits aggregation of misfolded proteins. At low concentrations, facilitates aggregation (anti-chaperone activity). May be involved with other chaperones in the structural modification of the TG precursor in hormone biogenesis. Also acts as a structural subunit of various enzymes such as prolyl 4-hydroxylase and microsomal triacylglycerol transfer protein MTTP. Receptor for LGALS9; the interaction retains P4HB at the cell surface of Th2 T helper cells, increasing disulfide reductase activity at the plasma membrane, altering the plasma membrane redox state and enhancing cell migration. This Homo sapiens (Human) protein is Protein disulfide-isomerase (P4HB).